Reading from the N-terminus, the 118-residue chain is Small ribosomal subunit protein uS11 (118 aa).

It belongs to the universal ribosomal protein uS11 family. As to quaternary structure, part of the 30S ribosomal subunit. Interacts with proteins S7 and S18. Binds to IF-3.

Located on the platform of the 30S subunit, it bridges several disparate RNA helices of the 16S rRNA. Forms part of the Shine-Dalgarno cleft in the 70S ribosome. This chain is Small ribosomal subunit protein uS11, found in Carsonella ruddii (strain PV).